Here is a 102-residue protein sequence, read N- to C-terminus: Co-chaperonin GroES (102 aa).

It belongs to the GroES chaperonin family. In terms of assembly, heptamer of 7 subunits arranged in a ring. Interacts with the chaperonin GroEL.

The protein resides in the cytoplasm. Its function is as follows. Together with the chaperonin GroEL, plays an essential role in assisting protein folding. The GroEL-GroES system forms a nano-cage that allows encapsulation of the non-native substrate proteins and provides a physical environment optimized to promote and accelerate protein folding. GroES binds to the apical surface of the GroEL ring, thereby capping the opening of the GroEL channel. The polypeptide is Co-chaperonin GroES (Streptomyces albus G).